Here is a 359-residue protein sequence, read N- to C-terminus: RNA 3'-terminal phosphate cyclase (359 aa).

ATP-binding positions include glutamine 100 and 291–294 (HASD). Histidine 317 acts as the Tele-AMP-histidine intermediate in catalysis.

Belongs to the RNA 3'-terminal cyclase family. Type 1 subfamily.

It is found in the cytoplasm. The enzyme catalyses a 3'-end 3'-phospho-ribonucleotide-RNA + ATP = a 3'-end 2',3'-cyclophospho-ribonucleotide-RNA + AMP + diphosphate. Functionally, catalyzes the conversion of 3'-phosphate to a 2',3'-cyclic phosphodiester at the end of RNA. The mechanism of action of the enzyme occurs in 3 steps: (A) adenylation of the enzyme by ATP; (B) transfer of adenylate to an RNA-N3'P to produce RNA-N3'PP5'A; (C) and attack of the adjacent 2'-hydroxyl on the 3'-phosphorus in the diester linkage to produce the cyclic end product. The biological role of this enzyme is unknown but it is likely to function in some aspects of cellular RNA processing. This chain is RNA 3'-terminal phosphate cyclase, found in Hyperthermus butylicus (strain DSM 5456 / JCM 9403 / PLM1-5).